Here is a 103-residue protein sequence, read N- to C-terminus: Turripeptide OL55-like (103 aa).

Post-translationally, contains 8 disulfide bonds. Expressed by the venom duct.

It localises to the secreted. In terms of biological role, acts as a neurotoxin by inhibiting an ion channel. This chain is Turripeptide OL55-like, found in Lophiotoma albina (Sea snail).